The sequence spans 804 residues: Phenylalanine--tRNA ligase beta subunit (804 aa).

The 122-residue stretch at 40–161 (FSMIDYLIIG…KANLGDTEVY (122 aa)) folds into the tRNA-binding domain. Positions 413–486 (EYHQQVKVNY…KILNINLFQP (74 aa)) constitute a B5 domain. Residues D464, D470, E473, and E474 each contribute to the Mg(2+) site. The region spanning 710 to 804 (DHYQEVTRDI…DLMKTKQILI (95 aa)) is the FDX-ACB domain.

The protein belongs to the phenylalanyl-tRNA synthetase beta subunit family. Type 1 subfamily. In terms of assembly, tetramer of two alpha and two beta subunits. Mg(2+) serves as cofactor.

It is found in the cytoplasm. The enzyme catalyses tRNA(Phe) + L-phenylalanine + ATP = L-phenylalanyl-tRNA(Phe) + AMP + diphosphate + H(+). The sequence is that of Phenylalanine--tRNA ligase beta subunit from Mycoplasmoides gallisepticum (strain R(low / passage 15 / clone 2)) (Mycoplasma gallisepticum).